Consider the following 502-residue polypeptide: ATP synthase subunit alpha (502 aa).

The disordered stretch occupies residues 119–139 (GPIATTKSRPIESPAPGVMDR). Position 169-176 (169-176 (GDRQTGKT)) interacts with ATP.

It belongs to the ATPase alpha/beta chains family. F-type ATPases have 2 components, CF(1) - the catalytic core - and CF(0) - the membrane proton channel. CF(1) has five subunits: alpha(3), beta(3), gamma(1), delta(1), epsilon(1). CF(0) has three main subunits: a(1), b(2) and c(9-12). The alpha and beta chains form an alternating ring which encloses part of the gamma chain. CF(1) is attached to CF(0) by a central stalk formed by the gamma and epsilon chains, while a peripheral stalk is formed by the delta and b chains.

The protein localises to the cell membrane. It catalyses the reaction ATP + H2O + 4 H(+)(in) = ADP + phosphate + 5 H(+)(out). Produces ATP from ADP in the presence of a proton gradient across the membrane. The alpha chain is a regulatory subunit. The chain is ATP synthase subunit alpha from Alkalihalophilus pseudofirmus (strain ATCC BAA-2126 / JCM 17055 / OF4) (Bacillus pseudofirmus).